A 245-amino-acid polypeptide reads, in one-letter code: Lactate utilization protein A (245 aa).

The protein belongs to the LutA/YkgE family.

Is involved in L-lactate degradation and allows cells to grow with lactate as the sole carbon source. The polypeptide is Lactate utilization protein A (Exiguobacterium sp. (strain ATCC BAA-1283 / AT1b)).